The chain runs to 300 residues: C-5 sterol desaturase (300 aa).

Transmembrane regions (helical) follow at residues 3–23, 68–88, 91–111, and 147–167; these read DPVL…WTAA, SLAL…QLSA, WYTW…YHRI, and ILMW…FCSW. The Fatty acid hydroxylase domain occupies 94 to 227; it reads WVIAIVGVDL…LIIWDRLFGS (134 aa).

The protein belongs to the sterol desaturase family.

The protein localises to the cell membrane. This is C-5 sterol desaturase (erg3) from Mycobacterium bovis (strain ATCC BAA-935 / AF2122/97).